A 251-amino-acid chain; its full sequence is PF03932 family protein CutC (251 aa).

Belongs to the CutC family.

The protein resides in the cytoplasm. The protein is PF03932 family protein CutC of Edwardsiella ictaluri (strain 93-146).